The chain runs to 371 residues: Glycosyltransferase 8 domain-containing protein 1 (371 aa).

The Cytoplasmic segment spans residues 1–5 (MSFRK). The helical; Signal-anchor for type II membrane protein transmembrane segment at 6–26 (VTIIIWALAVILFLLALHHNF) threads the bilayer. Over 27-371 (LSLSSLLRND…RRHMDTSNIK (345 aa)) the chain is Lumenal. Residue Asn-257 is glycosylated (N-linked (GlcNAc...) asparagine).

It belongs to the glycosyltransferase 8 family.

Its subcellular location is the membrane. In Rattus norvegicus (Rat), this protein is Glycosyltransferase 8 domain-containing protein 1 (Glt8d1).